Here is a 204-residue protein sequence, read N- to C-terminus: MTQGLLYVISAPSGAGKTSLVSALCAGAPDLAVSVSHTTRPQRPGEVPGQDYWFVDKAEFEKMIANEAFLEYARVFDNYYGTAKTTVEEVLATGRDAVLEIDWQGARQVRRLMPACVSVFILPPSRQALEQRLRTRQQDSEAVIARRMEAAISEMSHYAEYDYLIVNDDFNLALNQLRAIVQTQRLTVQRQAPRLGRLIADLLG.

A Guanylate kinase-like domain is found at 4 to 182 (GLLYVISAPS…ALNQLRAIVQ (179 aa)). An ATP-binding site is contributed by 11 to 18 (APSGAGKT).

This sequence belongs to the guanylate kinase family.

The protein localises to the cytoplasm. The enzyme catalyses GMP + ATP = GDP + ADP. Functionally, essential for recycling GMP and indirectly, cGMP. The sequence is that of Guanylate kinase from Methylococcus capsulatus (strain ATCC 33009 / NCIMB 11132 / Bath).